Consider the following 443-residue polypeptide: GTPase Der (443 aa).

2 EngA-type G domains span residues 3 to 167 (PTLV…PEPE) and 176 to 349 (VRVA…AAAM). GTP-binding positions include 9–16 (GRPNVGKS), 56–60 (DTGGF), 119–122 (NKAE), 182–189 (GRPNVGKS), 229–233 (DTAGM), and 294–297 (NKWD). A KH-like domain is found at 350-434 (AKMTTPRLTR…PLRIQFVTAK (85 aa)).

It belongs to the TRAFAC class TrmE-Era-EngA-EngB-Septin-like GTPase superfamily. EngA (Der) GTPase family. Associates with the 50S ribosomal subunit.

Its function is as follows. GTPase that plays an essential role in the late steps of ribosome biogenesis. This chain is GTPase Der, found in Dechloromonas aromatica (strain RCB).